The chain runs to 25 residues: Small ribosomal subunit protein eS32 eS32z/eS32y/eS32x/eS32w/eS32v (25 aa).

Residues 1 to 25 form a disordered region; it reads MRAKWKKKRMRRLKRKRRKMRQRSK.

This sequence belongs to the eukaryotic ribosomal protein eS32 family. As to quaternary structure, component of the small ribosomal subunit (SSU).

The protein is Small ribosomal subunit protein eS32 eS32z/eS32y/eS32x/eS32w/eS32v (RPL41A) of Arabidopsis thaliana (Mouse-ear cress).